The chain runs to 369 residues: Anthranilate phosphoribosyltransferase (369 aa).

5-phospho-alpha-D-ribose 1-diphosphate contacts are provided by residues Gly99, 102 to 103, 109 to 112, 127 to 135, and Ser139; these read GD, NVST, and KHGNRGVSS. Gly99 contributes to the anthranilate binding site. Ser111 is a binding site for Mg(2+). Asn130 contacts anthranilate. Anthranilate is bound at residue Arg185. Mg(2+)-binding residues include Asp244 and Glu245.

The protein belongs to the anthranilate phosphoribosyltransferase family. In terms of assembly, homodimer. It depends on Mg(2+) as a cofactor.

It carries out the reaction N-(5-phospho-beta-D-ribosyl)anthranilate + diphosphate = 5-phospho-alpha-D-ribose 1-diphosphate + anthranilate. It participates in amino-acid biosynthesis; L-tryptophan biosynthesis; L-tryptophan from chorismate: step 2/5. Its function is as follows. Catalyzes the transfer of the phosphoribosyl group of 5-phosphorylribose-1-pyrophosphate (PRPP) to anthranilate to yield N-(5'-phosphoribosyl)-anthranilate (PRA). The protein is Anthranilate phosphoribosyltransferase of Psychrobacter sp. (strain PRwf-1).